The chain runs to 126 residues: Non-specific lipid-transfer protein 13 (126 aa).

An N-terminal signal peptide occupies residues 1-20 (MDTHTTKLVAISLLLLLVIS). 4 cysteine pairs are disulfide-bonded: cysteine 36–cysteine 85, cysteine 46–cysteine 61, cysteine 62–cysteine 109, and cysteine 83–cysteine 123.

Belongs to the plant LTP family.

In terms of biological role, plant non-specific lipid-transfer proteins transfer phospholipids as well as galactolipids across membranes. May play a role in wax or cutin deposition in the cell walls of expanding epidermal cells and certain secretory tissues. This is Non-specific lipid-transfer protein 13 (LTP13) from Arabidopsis thaliana (Mouse-ear cress).